Here is a 186-residue protein sequence, read N- to C-terminus: Ribosome-recycling factor (186 aa).

Belongs to the RRF family.

The protein localises to the cytoplasm. Its function is as follows. Responsible for the release of ribosomes from messenger RNA at the termination of protein biosynthesis. May increase the efficiency of translation by recycling ribosomes from one round of translation to another. This is Ribosome-recycling factor from Rickettsia peacockii (strain Rustic).